An 86-amino-acid chain; its full sequence is Arminin 7246 (86 aa).

Positions 1-18 are cleaved as a signal peptide; it reads MRPEYAVLFLALIALTYA. Positions 19–57 are excised as a propeptide; sequence RSNEDVREEIKNEIEKDILEDLVEDEGELDDKAIDVNDA. A83 is modified (alanine amide).

This sequence belongs to the arminin family. In terms of tissue distribution, expressed in entodermal epithelium along the body column.

The protein localises to the secreted. Its subcellular location is the target cell membrane. In terms of biological role, antimicrobial peptide with a broad-spectrum antimicrobial activity. Keeps its antibacterial activity under a wide range of salt concentrations that mimic physiological conditions of human blood, which is surprising, since Hydra is an obligate freshwater animal with nearly no salt tolerance. Does not affect red blood cells. This Hydra viridissima (Green hydra) protein is Arminin 7246.